A 400-amino-acid polypeptide reads, in one-letter code: Enoyl-[acyl-carrier-protein] reductase [NADH] (400 aa).

NAD(+) is bound by residues 48 to 53, 74 to 75, 111 to 112, and 139 to 140; these read GSSSGY, FE, DA, and LA. Tyr225 is a substrate binding site. The Proton donor role is filled by Tyr235. NAD(+)-binding positions include Lys244 and 273–275; that span reads VVT.

This sequence belongs to the TER reductase family. As to quaternary structure, monomer.

The catalysed reaction is a 2,3-saturated acyl-[ACP] + NAD(+) = a (2E)-enoyl-[ACP] + NADH + H(+). Its pathway is lipid metabolism; fatty acid biosynthesis. Its function is as follows. Involved in the final reduction of the elongation cycle of fatty acid synthesis (FAS II). Catalyzes the reduction of a carbon-carbon double bond in an enoyl moiety that is covalently linked to an acyl carrier protein (ACP). In Shewanella baltica (strain OS185), this protein is Enoyl-[acyl-carrier-protein] reductase [NADH].